The sequence spans 324 residues: Olfactory receptor 11H4 (324 aa).

Topologically, residues 1 to 35 (MSFFFVDLRPMNRSATHIVTEFILLGFPGCWKIQI) are extracellular. Residue Asn-12 is glycosylated (N-linked (GlcNAc...) asparagine). The helical transmembrane segment at 36 to 56 (FLFSLFLVIYVLTLLGNGAII) threads the bilayer. Residues 57–64 (YAVRCNPL) are Cytoplasmic-facing. A helical transmembrane segment spans residues 65–85 (LHTPMYFLLGNFAFLEIWYVS). The Extracellular portion of the chain corresponds to 86-109 (STIPNMLVNILSKTKAISFSGCFL). A disulfide bridge connects residues Cys-107 and Cys-199. A helical transmembrane segment spans residues 110–130 (QFYFFFSLGTTECLFLAVMAY). Over 131–149 (DRYLAICHPLQYPAIMTVR) the chain is Cytoplasmic. Residues 150-170 (FCGKLVSFCWLIGFLGYPIPI) traverse the membrane as a helical segment. Over 171 to 207 (FYISQLPFCGPNIIDHFLCDMDPLMALSCAPAPITEC) the chain is Extracellular. A helical transmembrane segment spans residues 208–227 (IFYTQSSLVLFFTSMYILRS). The Cytoplasmic portion of the chain corresponds to 228–247 (YILLLTAVFQVPSAAGRRKA). The helical transmembrane segment at 248–268 (FSTCGSHLVVVSLFYGTVMVM) threads the bilayer. Over 269-281 (YVSPTYGIPTLLQ) the chain is Extracellular. The chain crosses the membrane as a helical span at residues 282 to 302 (KILTLVYSVTTPLFNPLIYTL). Residues 303–324 (RNKDMKLALRNVLFGMRIRQNS) are Cytoplasmic-facing.

This sequence belongs to the G-protein coupled receptor 1 family.

The protein localises to the cell membrane. In terms of biological role, odorant receptor. In Homo sapiens (Human), this protein is Olfactory receptor 11H4 (OR11H4).